The chain runs to 74 residues: DNA-directed RNA polymerase subunit omega (74 aa).

It belongs to the RNA polymerase subunit omega family. As to quaternary structure, the RNAP catalytic core consists of 2 alpha, 1 beta, 1 beta' and 1 omega subunit. When a sigma factor is associated with the core the holoenzyme is formed, which can initiate transcription.

It carries out the reaction RNA(n) + a ribonucleoside 5'-triphosphate = RNA(n+1) + diphosphate. Its function is as follows. Promotes RNA polymerase assembly. Latches the N- and C-terminal regions of the beta' subunit thereby facilitating its interaction with the beta and alpha subunits. The polypeptide is DNA-directed RNA polymerase subunit omega (Helicobacter pylori (strain Shi470)).